The sequence spans 65 residues: Ringhalexin (65 aa).

Intrachain disulfides connect Cys-3–Cys-24, Cys-17–Cys-42, Cys-46–Cys-57, and Cys-58–Cys-63.

In terms of tissue distribution, expressed by the venom gland.

The protein localises to the secreted. Its function is as follows. Has anticoagulant activity, since it is able to inhibit the activation of coagulation factor X (F10) by coagulation factor VIIa (F7) (IC(50)=123.8 nM). Also shows weak irreversible neurotoxicity. In Hemachatus haemachatus (Rinkhals), this protein is Ringhalexin.